Reading from the N-terminus, the 285-residue chain is Probable endonuclease 4 (285 aa).

Residues His-69, His-109, Glu-145, Asp-179, His-182, His-216, Asp-229, His-231, and Glu-261 each coordinate Zn(2+).

This sequence belongs to the AP endonuclease 2 family. It depends on Zn(2+) as a cofactor.

It carries out the reaction Endonucleolytic cleavage to 5'-phosphooligonucleotide end-products.. Endonuclease IV plays a role in DNA repair. It cleaves phosphodiester bonds at apurinic or apyrimidinic (AP) sites, generating a 3'-hydroxyl group and a 5'-terminal sugar phosphate. The protein is Probable endonuclease 4 of Yersinia pestis bv. Antiqua (strain Antiqua).